Reading from the N-terminus, the 314-residue chain is tRNA uridine(34) hydroxylase (314 aa).

The Rhodanese domain maps to 140 to 234 (ARDDVILIDT…YLEETPPDES (95 aa)). Cys-194 serves as the catalytic Cysteine persulfide intermediate.

The protein belongs to the TrhO family.

The enzyme catalyses uridine(34) in tRNA + AH2 + O2 = 5-hydroxyuridine(34) in tRNA + A + H2O. Its function is as follows. Catalyzes oxygen-dependent 5-hydroxyuridine (ho5U) modification at position 34 in tRNAs. The polypeptide is tRNA uridine(34) hydroxylase (Acinetobacter baumannii (strain AYE)).